We begin with the raw amino-acid sequence, 385 residues long: Homoserine O-succinyltransferase (385 aa).

An AB hydrolase-1 domain is found at N51–L360. S157 functions as the Nucleophile in the catalytic mechanism. A substrate-binding site is contributed by R227. Active-site residues include D323 and H356. Position 357 (D357) interacts with substrate.

It belongs to the AB hydrolase superfamily. MetX family. Homodimer.

It is found in the cytoplasm. The catalysed reaction is L-homoserine + succinyl-CoA = O-succinyl-L-homoserine + CoA. It functions in the pathway amino-acid biosynthesis; L-methionine biosynthesis via de novo pathway; O-succinyl-L-homoserine from L-homoserine: step 1/1. In terms of biological role, transfers a succinyl group from succinyl-CoA to L-homoserine, forming succinyl-L-homoserine. The protein is Homoserine O-succinyltransferase of Hahella chejuensis (strain KCTC 2396).